The sequence spans 93 residues: Small ribosomal subunit protein uS19 (93 aa).

This sequence belongs to the universal ribosomal protein uS19 family.

In terms of biological role, protein S19 forms a complex with S13 that binds strongly to the 16S ribosomal RNA. The protein is Small ribosomal subunit protein uS19 of Campylobacter concisus (strain 13826).